A 475-amino-acid chain; its full sequence is Gustatory and pheromone receptor 33a (475 aa).

The Cytoplasmic portion of the chain corresponds to methionine 1 to cysteine 34. Residues isoleucine 35–leucine 55 traverse the membrane as a helical segment. Topologically, residues cysteine 56 to serine 68 are extracellular. The helical transmembrane segment at serine 69–tyrosine 89 threads the bilayer. Over arginine 90 to histidine 128 the chain is Cytoplasmic. The chain crosses the membrane as a helical span at residues serine 129–tyrosine 149. Topologically, residues aspartate 150–phenylalanine 158 are extracellular. Residues glycine 159–isoleucine 179 form a helical membrane-spanning segment. At glutamine 180–glutamate 319 the chain is on the cytoplasmic side. The tract at residues threonine 243–aspartate 281 is disordered. A compositionally biased stretch (basic and acidic residues) spans phenylalanine 251 to asparagine 264. A compositionally biased stretch (acidic residues) spans aspartate 265–aspartate 281. A helical membrane pass occupies residues phenylalanine 320–phenylalanine 340. Topologically, residues leucine 341–aspartate 357 are extracellular. Residues tyrosine 358–leucine 378 form a helical membrane-spanning segment. Topologically, residues arginine 379–aspartate 441 are cytoplasmic. The chain crosses the membrane as a helical span at residues tyrosine 442 to phenylalanine 462. Topologically, residues aspartate 463–serine 475 are extracellular.

It belongs to the insect chemoreceptor superfamily. Gustatory receptor (GR) family. Gr66a subfamily. Expressed widely in gustatory receptor neurons (GRNs) that respond to aversive chemicals. In larvae, is expressed in neurons of the terminal external chemosensory organ, and the dorsal, ventral and posterior external chemosensory organs.

The protein resides in the cell membrane. Gustatory receptor which mediates acceptance or avoidance behavior, depending on its substrates. Required for sensing all nonvolatile repulsive chemicals, including tastants, pheromones, and especially N,N-Diethyl-meta-toluamide (DEET), the most widely used insect repellent worldwide. Also functions as a pheromone receptor for a male inhibitory pheromone leading to male-male courtship suppression. In Drosophila melanogaster (Fruit fly), this protein is Gustatory and pheromone receptor 33a (Gr33a).